The following is a 529-amino-acid chain: Cytochrome P450 monooxygenase oblE (529 aa).

The helical transmembrane segment at 38 to 58 (WQYIVTLLIAIITYDQVMYIW) threads the bilayer. Cysteine 477 serves as a coordination point for heme.

Belongs to the cytochrome P450 family. The cofactor is heme.

It is found in the membrane. Its pathway is secondary metabolite biosynthesis; terpenoid biosynthesis. Functionally, cytochrome P450 monooxygenase; part of the gene cluster that mediates the biosynthesis of the sesterterpenes ophiobolins, fungal phytotoxins with potential anti-cancer activities. The first step of the pathway is performed by the sesterterpene synthase oblA that possesses both prenyl transferase and terpene cyclase activity, converting isopentenyl diphosphate and dimethylallyl diphosphate into geranylfarnesyl diphosphate (GFPP) and further converting GFPP into ophiobolin F, respectively. Other sesterterpenoids (C(25) terpenoids) are found as minor products of oblA. The cytochrome P450 monooxygenase oblB then catalyzes a four-step oxidative transformation of ophiobolin F to yield ophiobolin C. The function of the cytochrome P450 monooxygenase oblE has still to be determined. In Emericella variicolor (Aspergillus stellatus), this protein is Cytochrome P450 monooxygenase oblE.